The primary structure comprises 288 residues: Shikimate kinase (288 aa).

81-91 provides a ligand contact to ATP; it reads PVASGLKSSSA.

Belongs to the GHMP kinase family. Archaeal shikimate kinase subfamily.

Its subcellular location is the cytoplasm. It carries out the reaction shikimate + ATP = 3-phosphoshikimate + ADP + H(+). Its pathway is metabolic intermediate biosynthesis; chorismate biosynthesis; chorismate from D-erythrose 4-phosphate and phosphoenolpyruvate: step 5/7. The protein is Shikimate kinase of Methanothrix thermoacetophila (strain DSM 6194 / JCM 14653 / NBRC 101360 / PT) (Methanosaeta thermophila).